We begin with the raw amino-acid sequence, 489 residues long: MTLRHCVAVDLGASSGRVMLACYAPEQRTLTLREIHRFVNCLQKQGGVDTWDIDSLEAEIRTGLNKVCEEGILIDSIGIDTWGVDYVLLDRNGARIGLPVSYRDSRTDGVMARAIEQLGKADIYGRSGIQFLPFNTLYQLRALAEQQPELIKNVAHALLIPDYFSYRLTGNMNWEYTNATTTQLVNINSDNWDENLLNWTGVSAAWFGTPTHPGNVIGHWICPLGNQIPVVAVASHDTASAVIASPLASQDAAYLSSGTWSLMGFESKTPYTSDAALAANITNEGGAEGRYRVLKNIMGLWLLQRVLKEQNVSDLSALIADTETLAACRFVINPNDDRFINPANMSTEIQAACRETNQPVPNTPAELARCIFDSLALLYADVLQELATLRGKPFSQLHIVGGGCQNRLLNQLCADACGITVVAGPVEASTLGNIGIQLMTLDELTNVDDFRTVVTGNYALTTFTPHSCHEIARYRAQFQQKRLTKELCA.

13–17 (ASSGR) lines the ATP pocket. A disulfide bond links Cys68 and Cys222. Residues Gly83 and 236–238 (HDT) each bind substrate. Asp237 serves as the catalytic Proton acceptor. Thr259 contributes to the ATP binding site. Asn296 serves as a coordination point for substrate. Gln304 serves as a coordination point for ATP. The cysteines at positions 353 and 370 are disulfide-linked. Position 402 (Gly402) interacts with ATP. Cys413 and Cys417 are joined by a disulfide.

This sequence belongs to the rhamnulokinase family. Mg(2+) is required as a cofactor.

The enzyme catalyses L-rhamnulose + ATP = L-rhamnulose 1-phosphate + ADP + H(+). It functions in the pathway carbohydrate degradation; L-rhamnose degradation; glycerone phosphate from L-rhamnose: step 2/3. In terms of biological role, involved in the catabolism of L-rhamnose (6-deoxy-L-mannose). Catalyzes the transfer of the gamma-phosphate group from ATP to the 1-hydroxyl group of L-rhamnulose to yield L-rhamnulose 1-phosphate. The protein is Rhamnulokinase of Enterobacter sp. (strain 638).